The sequence spans 147 residues: uncharacterized protein (147 aa).

The disordered stretch occupies residues 30–102; it reads GRCEQVALSS…TPPTRPESIF (73 aa). Residues 62-71 are compositionally biased toward polar residues; the sequence is RPSTGETFVQ.

This is an uncharacterized protein from Homo sapiens (Human).